Here is a 218-residue protein sequence, read N- to C-terminus: Thiopurine S-methyltransferase (218 aa).

S-adenosyl-L-methionine contacts are provided by Trp10, Leu45, Glu66, and Arg123.

It belongs to the class I-like SAM-binding methyltransferase superfamily. TPMT family.

The protein resides in the cytoplasm. It carries out the reaction S-adenosyl-L-methionine + a thiopurine = S-adenosyl-L-homocysteine + a thiopurine S-methylether.. The polypeptide is Thiopurine S-methyltransferase (Xanthomonas campestris pv. campestris (strain 8004)).